Reading from the N-terminus, the 256-residue chain is Acetyl-coenzyme A carboxylase carboxyl transferase subunit beta 2 (256 aa).

The CoA carboxyltransferase N-terminal domain maps to 1 to 256 (MTVKCNKCKE…LAIHAETVSA (256 aa)). Residues Cys-5, Cys-8, Cys-24, and Cys-27 each coordinate Zn(2+). The C4-type zinc finger occupies 5–27 (CNKCKEEINKEDLEKNYYICPLC).

It belongs to the AccD/PCCB family. Acetyl-CoA carboxylase is a heterohexamer composed of biotin carboxyl carrier protein (AccB), biotin carboxylase (AccC) and two subunits each of ACCase subunit alpha (AccA) and ACCase subunit beta (AccD). Zn(2+) is required as a cofactor.

The protein resides in the cytoplasm. The catalysed reaction is N(6)-carboxybiotinyl-L-lysyl-[protein] + acetyl-CoA = N(6)-biotinyl-L-lysyl-[protein] + malonyl-CoA. The protein operates within lipid metabolism; malonyl-CoA biosynthesis; malonyl-CoA from acetyl-CoA: step 1/1. In terms of biological role, component of the acetyl coenzyme A carboxylase (ACC) complex. Biotin carboxylase (BC) catalyzes the carboxylation of biotin on its carrier protein (BCCP) and then the CO(2) group is transferred by the transcarboxylase to acetyl-CoA to form malonyl-CoA. The chain is Acetyl-coenzyme A carboxylase carboxyl transferase subunit beta 2 from Lachnospira eligens (strain ATCC 27750 / DSM 3376 / VPI C15-48 / C15-B4) (Eubacterium eligens).